Reading from the N-terminus, the 262-residue chain is Ninja-family protein 2 (262 aa).

Positions 49–70 (RNSLACNTSKEAAGQSPKEMNA) are disordered.

This sequence belongs to the Ninja family.

It localises to the nucleus. In Zea mays (Maize), this protein is Ninja-family protein 2.